We begin with the raw amino-acid sequence, 246 residues long: Transcription factor MYB113 (246 aa).

2 consecutive HTH myb-type domains span residues 5-61 and 62-112; these read PKGL…KPSI and KRGK…SKKH. 2 consecutive DNA-binding regions (H-T-H motif) follow at residues 33 to 57 and 85 to 108; these read WHRV…LNYL and WSLI…NTHL.

Interacts with BHLH002/EGL3/MYC146, BHLH012/MYC1 and BHLH042/TT8.

The protein localises to the nucleus. In terms of biological role, transcription activator, when associated with BHLH002/EGL3/MYC146, BHLH012/MYC1, or BHLH042/TT8. The sequence is that of Transcription factor MYB113 (MYB113) from Arabidopsis thaliana (Mouse-ear cress).